A 413-amino-acid polypeptide reads, in one-letter code: Probable isoleucine--tRNA ligase, mitochondrial (413 aa).

A 'KMSKS' region motif is present at residues 298–302 (KMSKS). Position 301 (Lys301) interacts with ATP.

Belongs to the class-I aminoacyl-tRNA synthetase family.

It localises to the mitochondrion matrix. It catalyses the reaction tRNA(Ile) + L-isoleucine + ATP = L-isoleucyl-tRNA(Ile) + AMP + diphosphate. The chain is Probable isoleucine--tRNA ligase, mitochondrial from Ciona intestinalis (Transparent sea squirt).